A 248-amino-acid polypeptide reads, in one-letter code: Phosphomannomutase (248 aa).

The active-site Nucleophile is the D12. Residues D12 and D14 each coordinate Mg(2+). D14 (proton donor/acceptor) is an active-site residue. Positions 21, 123, 134, 141, 179, and 181 each coordinate alpha-D-mannose 1-phosphate. Residues D207, F219, and T224 each contribute to the Mg(2+) site.

It belongs to the eukaryotic PMM family. Homodimer. The cofactor is Mg(2+).

Its subcellular location is the cytoplasm. It catalyses the reaction alpha-D-mannose 1-phosphate = D-mannose 6-phosphate. It functions in the pathway nucleotide-sugar biosynthesis; GDP-alpha-D-mannose biosynthesis; alpha-D-mannose 1-phosphate from D-fructose 6-phosphate: step 2/2. Catalyzes the interconversion of mannose-6-phosphate to mannose-1-phosphate, the precursor for the synthesis of GDP-mannose. GDP-mannose is an essential sugar nucleotide for the synthesis of D-mannose-containing cell wall polysaccharides (galactomannans and glucomannans), glycolipids, glycoproteins and the antioxidant L-ascorbate. The sequence is that of Phosphomannomutase from Spinacia oleracea (Spinach).